The sequence spans 328 residues: Cytosolic Fe-S cluster assembly factor NBP35 (328 aa).

[4Fe-4S] cluster-binding residues include Cys-27, Cys-41, Cys-44, and Cys-50. 80-87 (GKGGVGKS) is an ATP binding site. The [4Fe-4S] cluster site is built by Cys-253 and Cys-256.

The protein belongs to the Mrp/NBP35 ATP-binding proteins family. NUBP1/NBP35 subfamily. As to quaternary structure, heterotetramer of 2 NBP35 and 2 CFD1 chains. [4Fe-4S] cluster is required as a cofactor.

The protein localises to the cytoplasm. It localises to the nucleus. Component of the cytosolic iron-sulfur (Fe/S) protein assembly (CIA) machinery. Required for maturation of extramitochondrial Fe-S proteins. The NBP35-CFD1 heterotetramer forms a Fe-S scaffold complex, mediating the de novo assembly of an Fe-S cluster and its transfer to target apoproteins. Required for biogenesis and export of both ribosomal subunits, which may reflect a role in assembly of the Fe/S clusters in RLI1, a protein which performs rRNA processing and ribosome export. The chain is Cytosolic Fe-S cluster assembly factor NBP35 from Saccharomyces cerevisiae (strain ATCC 204508 / S288c) (Baker's yeast).